Consider the following 84-residue polypeptide: Small ribosomal subunit protein uS17 (84 aa).

The protein belongs to the universal ribosomal protein uS17 family. In terms of assembly, part of the 30S ribosomal subunit.

Functionally, one of the primary rRNA binding proteins, it binds specifically to the 5'-end of 16S ribosomal RNA. This is Small ribosomal subunit protein uS17 from Vibrio parahaemolyticus serotype O3:K6 (strain RIMD 2210633).